The sequence spans 592 residues: Imidazole glycerol phosphate synthase hisHF, chloroplastic (592 aa).

A chloroplast-targeting transit peptide spans 1–55 (MEATAAPFSSIVSSRQNFSSSSSIRASSPASLFLSQKSIGNVNRKFKSPRSLSVR). The 209-residue stretch at 63-271 (VVTLLDYGAG…LHPKLPATQK (209 aa)) folds into the Glutamine amidotransferase type-1 domain. Residues Cys141, His246, and Glu248 each act as for GATase activity in the active site. A cyclase region spans residues 280–592 (LAKRVIACLD…LQEERIEVRI (313 aa)). Catalysis depends on residues Asp289 and Asp447.

In the C-terminal section; belongs to the HisA/HisF family.

The protein resides in the plastid. It is found in the chloroplast. It carries out the reaction 5-[(5-phospho-1-deoxy-D-ribulos-1-ylimino)methylamino]-1-(5-phospho-beta-D-ribosyl)imidazole-4-carboxamide + L-glutamine = D-erythro-1-(imidazol-4-yl)glycerol 3-phosphate + 5-amino-1-(5-phospho-beta-D-ribosyl)imidazole-4-carboxamide + L-glutamate + H(+). It catalyses the reaction L-glutamine + H2O = L-glutamate + NH4(+). It participates in amino-acid biosynthesis; L-histidine biosynthesis; L-histidine from 5-phospho-alpha-D-ribose 1-diphosphate: step 5/9. Functionally, IGPS catalyzes the conversion of PRFAR and glutamine to IGP, AICAR and glutamate. The glutaminase domain produces the ammonia necessary for the cyclase domain to produce IGP and AICAR from PRFAR. The ammonia is channeled to the active site of the cyclase domain. The sequence is that of Imidazole glycerol phosphate synthase hisHF, chloroplastic (HISN4) from Arabidopsis thaliana (Mouse-ear cress).